The sequence spans 273 residues: MKKYLLGIGLILALIACKQNVSSLDEKNSVSVDLPGEMNVLVSKEKNKDGKYDLIATVDKLELKGTSDKNNGSGVLEGVKADKSKVKLTISDDLGQTTLEVFKEDGKTLVSKKVTSKDKSSTEEKFNEKGEVSEKIITRADGTRLEYTEIKSDGSGKAKEVLKGYVLEGTLTAEKTTLVVKEGTVTLSKNISKSGEVSVELNDTDSSAATKKTAAWNSGTSTLTITVNSKKTKDLVFTKENTITVQQYDSNGTKLEGSAVEITKLDEIKNALK.

The first 16 residues, 1-16 (MKKYLLGIGLILALIA), serve as a signal peptide directing secretion. Cysteine 17 carries the N-palmitoyl cysteine lipid modification. A lipid anchor (S-diacylglycerol cysteine) is attached at cysteine 17.

It belongs to the OspA lipoprotein family.

It localises to the cell outer membrane. The protein localises to the cell surface. This Borreliella burgdorferi (strain N40) (Borrelia burgdorferi) protein is Outer surface protein A.